A 143-amino-acid polypeptide reads, in one-letter code: Large-conductance mechanosensitive channel (143 aa).

2 consecutive transmembrane segments (helical) span residues 19-39 (VGVI…ADVI) and 81-101 (GSFL…FLVV).

The protein belongs to the MscL family. Homopentamer.

It is found in the cell inner membrane. In terms of biological role, channel that opens in response to stretch forces in the membrane lipid bilayer. May participate in the regulation of osmotic pressure changes within the cell. The sequence is that of Large-conductance mechanosensitive channel from Rhodopseudomonas palustris (strain HaA2).